The chain runs to 524 residues: Peptide chain release factor 3 (524 aa).

In terms of domain architecture, tr-type G spans 11–278 (AKRRTFAIIS…SFVQYAPEPG (268 aa)). GTP-binding positions include 20–27 (SHPDAGKT), 88–92 (DTPGH), and 142–145 (NKLD).

Belongs to the TRAFAC class translation factor GTPase superfamily. Classic translation factor GTPase family. PrfC subfamily.

It localises to the cytoplasm. In terms of biological role, increases the formation of ribosomal termination complexes and stimulates activities of RF-1 and RF-2. It binds guanine nucleotides and has strong preference for UGA stop codons. It may interact directly with the ribosome. The stimulation of RF-1 and RF-2 is significantly reduced by GTP and GDP, but not by GMP. This is Peptide chain release factor 3 from Lacticaseibacillus paracasei (strain ATCC 334 / BCRC 17002 / CCUG 31169 / CIP 107868 / KCTC 3260 / NRRL B-441) (Lactobacillus paracasei).